Consider the following 197-residue polypeptide: Na(+)-translocating NADH-quinone reductase subunit E (197 aa).

The next 6 membrane-spanning stretches (helical) occupy residues 11–31 (SVFIENMALSFFLGMCTFLAV), 35–55 (VSTAFGLGVAVIFVLGLSVPV), 76–96 (FLKFITFIGVIAALVQILEMF), 108–128 (LGIYLPLITVNCAIFGAVSFM), 139–159 (VVYGFGAGLGWMLAIVALAGI), and 175–195 (LGITFIAAGLMAMAFMSFSGI).

The protein belongs to the NqrDE/RnfAE family. Composed of six subunits; NqrA, NqrB, NqrC, NqrD, NqrE and NqrF.

It is found in the cell inner membrane. The catalysed reaction is a ubiquinone + n Na(+)(in) + NADH + H(+) = a ubiquinol + n Na(+)(out) + NAD(+). NQR complex catalyzes the reduction of ubiquinone-1 to ubiquinol by two successive reactions, coupled with the transport of Na(+) ions from the cytoplasm to the periplasm. NqrA to NqrE are probably involved in the second step, the conversion of ubisemiquinone to ubiquinol. This Neisseria meningitidis serogroup C (strain 053442) protein is Na(+)-translocating NADH-quinone reductase subunit E.